A 418-amino-acid chain; its full sequence is Gene 68 protein (418 aa).

Disordered stretches follow at residues 230 to 304 (IPAP…IHTL) and 353 to 418 (DTFE…ERRA). Positions 241–250 (RPSEGGDARP) are enriched in basic and acidic residues. A compositionally biased stretch (basic residues) spans 257-266 (SRARSVHGRR). A compositionally biased stretch (basic and acidic residues) spans 353-369 (DTFEDNRRDELRHDDSR). A compositionally biased stretch (basic residues) spans 395 to 404 (PHLRRSRGRG).

It belongs to the herpesviridae US2 family.

In Equine herpesvirus 1 (strain Ab4p) (EHV-1), this protein is Gene 68 protein.